Reading from the N-terminus, the 433-residue chain is Trigger factor (433 aa).

A PPIase FKBP-type domain is found at 166-251; the sequence is GDFAVIDFEG…LHEIQERAKP (86 aa).

It belongs to the FKBP-type PPIase family. Tig subfamily.

It is found in the cytoplasm. It carries out the reaction [protein]-peptidylproline (omega=180) = [protein]-peptidylproline (omega=0). In terms of biological role, involved in protein export. Acts as a chaperone by maintaining the newly synthesized protein in an open conformation. Functions as a peptidyl-prolyl cis-trans isomerase. In Aliarcobacter butzleri (strain RM4018) (Arcobacter butzleri), this protein is Trigger factor.